The chain runs to 396 residues: UDP-galactose translocator (396 aa).

The next 10 membrane-spanning stretches (helical) occupy residues 3-23 (AVGAGGSTAAPGPGAVSAGAL), 37-57 (YISLAVLVVQNASLILSIRYA), 65-85 (FFATTAVVMAEVLKGLTCLLL), 97-117 (LVLFLHEAVLVQYVDTLKLAV), 140-160 (TFQVTYQLKILTTALFSVLML), 169-189 (WASLLLLFTGVAIVQAQQAGG), 200-220 (GAGLAAVVASCLSSGFAGVYF), 238-258 (LGLFGTALGLVGLWWAEGTAV), 269-289 (PAVWGVVLNQAFGGLLVAVVV), and 315-335 (LFGFHVDPLFALGAGLVIGAV). Positions 358–379 (PCVHQQPPGQPPPPQLSSHRGD) are disordered. The ER retention motif motif lies at 392 to 396 (KVKGS).

Belongs to the nucleotide-sugar transporter family. SLC35A subfamily. In terms of assembly, interacts with SLC35A3; the interaction is reduced in the presence of SLC35A4. Found in a complex with SLC35A3 and SLC35A4. Interacts with B4GALT4.

Its subcellular location is the endoplasmic reticulum membrane. It localises to the golgi apparatus membrane. The catalysed reaction is UMP(out) + UDP-alpha-D-galactose(in) = UMP(in) + UDP-alpha-D-galactose(out). The enzyme catalyses UDP-N-acetyl-alpha-D-galactosamine(in) + UMP(out) = UDP-N-acetyl-alpha-D-galactosamine(out) + UMP(in). It carries out the reaction UMP(out) + UDP-alpha-D-glucose(in) = UMP(in) + UDP-alpha-D-glucose(out). It catalyses the reaction UMP(out) + UDP-N-acetyl-alpha-D-glucosamine(in) = UMP(in) + UDP-N-acetyl-alpha-D-glucosamine(out). The catalysed reaction is UDP-alpha-D-galactose(in) + AMP(out) = UDP-alpha-D-galactose(out) + AMP(in). The enzyme catalyses UDP-alpha-D-galactose(in) + CMP(out) = UDP-alpha-D-galactose(out) + CMP(in). It carries out the reaction UDP-N-acetyl-alpha-D-galactosamine(out) + UDP-alpha-D-galactose(in) = UDP-N-acetyl-alpha-D-galactosamine(in) + UDP-alpha-D-galactose(out). It catalyses the reaction UDP-N-acetyl-alpha-D-glucosamine(out) + UDP-alpha-D-galactose(in) = UDP-N-acetyl-alpha-D-glucosamine(in) + UDP-alpha-D-galactose(out). The catalysed reaction is UDP-alpha-D-galactose(in) + UDP-alpha-D-glucose(out) = UDP-alpha-D-galactose(out) + UDP-alpha-D-glucose(in). The enzyme catalyses UMP(out) + CMP(in) = UMP(in) + CMP(out). It carries out the reaction UMP(out) + AMP(in) = UMP(in) + AMP(out). In terms of biological role, transports uridine diphosphate galactose (UDP-galactose) from the cytosol into the Golgi apparatus, functioning as an antiporter that exchanges UDP-galactose for UMP. It is also able to exchange UDP-galactose for AMP and CMP, and to transport UDP-N-acetylgalactosamine (UDP-GalNAc) and other nucleotide sugars. As a provider of UDP-galactose to galactosyltransferases present in the Golgi apparatus, it is necessary for globotriaosylceramide/globoside (Gb3Cer) synthesis from lactosylceramide. This is UDP-galactose translocator from Homo sapiens (Human).